Reading from the N-terminus, the 250-residue chain is Triosephosphate isomerase (250 aa).

Residue 9-11 (NWK) participates in substrate binding. The Electrophile role is filled by histidine 96. Glutamate 166 serves as the catalytic Proton acceptor. Substrate-binding positions include glycine 172, serine 212, and 233–234 (GG).

It belongs to the triosephosphate isomerase family. As to quaternary structure, homodimer.

The protein resides in the cytoplasm. It catalyses the reaction D-glyceraldehyde 3-phosphate = dihydroxyacetone phosphate. Its pathway is carbohydrate biosynthesis; gluconeogenesis. It functions in the pathway carbohydrate degradation; glycolysis; D-glyceraldehyde 3-phosphate from glycerone phosphate: step 1/1. Functionally, involved in the gluconeogenesis. Catalyzes stereospecifically the conversion of dihydroxyacetone phosphate (DHAP) to D-glyceraldehyde-3-phosphate (G3P). The chain is Triosephosphate isomerase from Chlorobium phaeovibrioides (strain DSM 265 / 1930) (Prosthecochloris vibrioformis (strain DSM 265)).